The primary structure comprises 359 residues: Membrane-bound lytic murein transglycosylase C (359 aa).

Positions 1 to 16 are cleaved as a signal peptide; the sequence is MKKYLALALIAPLLIS. A lipid anchor (N-palmitoyl cysteine) is attached at Cys-17. Residue Cys-17 is the site of S-diacylglycerol cysteine attachment.

Belongs to the transglycosylase Slt family.

Its subcellular location is the cell outer membrane. The catalysed reaction is Exolytic cleavage of the (1-&gt;4)-beta-glycosidic linkage between N-acetylmuramic acid (MurNAc) and N-acetylglucosamine (GlcNAc) residues in peptidoglycan, from either the reducing or the non-reducing ends of the peptidoglycan chains, with concomitant formation of a 1,6-anhydrobond in the MurNAc residue.. Functionally, murein-degrading enzyme. May play a role in recycling of muropeptides during cell elongation and/or cell division. The chain is Membrane-bound lytic murein transglycosylase C from Escherichia coli O127:H6 (strain E2348/69 / EPEC).